Here is a 915-residue protein sequence, read N- to C-terminus: Clathrin coat assembly protein AP180 (915 aa).

The ENTH domain occupies 14 to 145 (QYSVTGSAVA…FSYRQMAFDF (132 aa)). 3 disordered regions span residues 285 to 326 (LEGK…DTSP), 391 to 425 (SVPS…ATTA), and 497 to 522 (PETS…PSPA). Phosphoserine is present on residues Ser296, Ser300, and Ser306. Over residues 302–324 (LSKSSPATTVTSPNSTPAKTIDT) the composition is skewed to polar residues. Residue Thr310 is glycosylated (O-linked (GlcNAc) threonine). Phosphoserine is present on Ser313. Thr317 carries the phosphothreonine modification. Low complexity-rich tracts occupy residues 410 to 425 (TTTT…ATTA) and 500 to 511 (SAPVVTPTASTA). Residues 512–522 (PPVPATAPSPA) show a composition bias toward pro residues. 5 positions are modified to phosphoserine: Ser594, Ser600, Pro627, Ser640, and Ser646. The span at 720–735 (TTPSTSSSSSFDPSGD) shows a compositional bias: low complexity. The disordered stretch occupies residues 720 to 765 (TTPSTSSSSSFDPSGDLLMPTMAPSGQPAPVSMVPPSPAMSASKGL). A Phosphoserine modification is found at Ser775. The disordered stretch occupies residues 817–855 (SAGVPPQGTVPPTSSVPPGAGAPSVGQPGAGYGMPPAGT). Arg873 carries the post-translational modification Asymmetric dimethylarginine; alternate. Omega-N-methylarginine; alternate is present on Arg873. Residues 875 to 915 (PFGAAAVPGTQLSPSPTPATQSPKKPPAKDPLADLNIKDFL) form a disordered region. Residues 884–896 (TQLSPSPTPATQS) are compositionally biased toward polar residues. Basic and acidic residues predominate over residues 901-915 (PAKDPLADLNIKDFL).

The protein belongs to the PICALM/SNAP91 family. Binds AP2A2. Interacts with AP2B1; clathrin competes with SNAP91. Thr-310 can be modified by the addition of N-acetylglucosamine which can be further phosphorylated. The form with phosphorylated O-linked N-acetylglucosamine is predominant in brain synaptosomes. There is no evidence for direct Thr-310 phosphorylation.

The protein resides in the cell membrane. The protein localises to the membrane. Its subcellular location is the coated pit. Adaptins are components of the adapter complexes which link clathrin to receptors in coated vesicles. Clathrin-associated protein complexes are believed to interact with the cytoplasmic tails of membrane proteins, leading to their selection and concentration. Binding of AP180 to clathrin triskelia induces their assembly into 60-70 nm coats. This chain is Clathrin coat assembly protein AP180 (Snap91), found in Rattus norvegicus (Rat).